A 566-amino-acid chain; its full sequence is KsdD-like steroid dehydrogenase MT0809 (566 aa).

Asp-23–Asn-54 is a binding site for FAD.

It belongs to the FAD-dependent oxidoreductase 2 family. The cofactor is FAD.

The protein operates within lipid metabolism; steroid biosynthesis. In terms of biological role, able to catalyze the elimination of the C-1 and C-2 hydrogen atoms of the A-ring from the polycyclic ring structure of 3-ketosteroids. This is KsdD-like steroid dehydrogenase MT0809 from Mycobacterium tuberculosis (strain CDC 1551 / Oshkosh).